The primary structure comprises 124 residues: Large ribosomal subunit protein bL12 (124 aa).

It belongs to the bacterial ribosomal protein bL12 family. As to quaternary structure, homodimer. Part of the ribosomal stalk of the 50S ribosomal subunit. Forms a multimeric L10(L12)X complex, where L10 forms an elongated spine to which 2 to 4 L12 dimers bind in a sequential fashion. Binds GTP-bound translation factors.

Forms part of the ribosomal stalk which helps the ribosome interact with GTP-bound translation factors. Is thus essential for accurate translation. This chain is Large ribosomal subunit protein bL12, found in Anaeromyxobacter dehalogenans (strain 2CP-C).